Here is a 510-residue protein sequence, read N- to C-terminus: Cytochrome c-552 (510 aa).

A signal peptide spans 1–50; the sequence is MVVFLFILYRQSDLKFKSMNGVIIVNTLKKRLFVATTMIWGLSVTLPVLA. Residue His-124 coordinates heme c. 3 residues coordinate heme: Cys-152, Cys-155, and Lys-156. Positions 190, 193, 194, 239, 242, and 243 each coordinate heme c. Residues Glu-245, Tyr-246, Lys-291, and Gln-293 each coordinate Ca(2+). Residue Tyr-246 participates in substrate binding. Residue His-294 coordinates substrate. Heme c contacts are provided by His-305, Cys-312, Cys-315, His-316, His-331, Cys-344, Cys-347, His-348, and His-423.

This sequence belongs to the cytochrome c-552 family. The cofactor is Ca(2+). Heme c serves as cofactor.

Its subcellular location is the periplasm. The catalysed reaction is 6 Fe(III)-[cytochrome c] + NH4(+) + 2 H2O = 6 Fe(II)-[cytochrome c] + nitrite + 8 H(+). It participates in nitrogen metabolism; nitrate reduction (assimilation). Its function is as follows. Catalyzes the reduction of nitrite to ammonia, consuming six electrons in the process. The sequence is that of Cytochrome c-552 from Pasteurella multocida (strain Pm70).